The sequence spans 338 residues: ABC transporter I family member 6, chloroplastic (338 aa).

The N-terminal 66 residues, 1–66 (MAGVNLQLRH…RTTRRSVIVS (66 aa)), are a transit peptide targeting the chloroplast. An ABC transporter domain is found at 92–338 (LEVRDLRAVI…EKEGYKAISG (247 aa)). 126–133 (GKNGSGKS) contributes to the ATP binding site.

Belongs to the ABC transporter superfamily. ABCI family. Interacts with NAP6. In terms of tissue distribution, present in all organs, with higher levels in aerial parts.

The protein localises to the plastid. The protein resides in the chloroplast. Functionally, essential protein. Required during embryo development, especially at early stages. Involved in chloroplast differentiation. The protein is ABC transporter I family member 6, chloroplastic (ABCI6) of Arabidopsis thaliana (Mouse-ear cress).